The primary structure comprises 103 residues: uncharacterized protein (103 aa).

Positions 1–21 (MTGFKVSSFFYILALSRFFNA) are cleaved as a signal peptide.

This is an uncharacterized protein from Saccharomyces cerevisiae (strain ATCC 204508 / S288c) (Baker's yeast).